We begin with the raw amino-acid sequence, 408 residues long: Serine/threonine-protein kinase ATG1t (408 aa).

Residues 7 to 272 form the Protein kinase domain; sequence YIAKSKLSES…GRIKNSRVWV (266 aa). ATP is bound by residues 13 to 21 and lysine 36; that span reads LSESLTSTV. Residue aspartate 129 is the Proton acceptor of the active site.

This sequence belongs to the protein kinase superfamily. Ser/Thr protein kinase family.

The protein localises to the cytoplasmic vesicle. The protein resides in the autophagosome. In terms of biological role, serine/threonine protein kinase involved in autophagy. The ATG1-ATG13 protein kinase complex regulates downstream events required for autophagosome enclosure and/or vacuolar delivery. This is Serine/threonine-protein kinase ATG1t from Arabidopsis thaliana (Mouse-ear cress).